Consider the following 426-residue polypeptide: UPF0229 protein YeaH (426 aa).

The span at 78 to 92 (GNDHFIQNDRIERPQ) shows a compositional bias: basic and acidic residues. Positions 78 to 108 (GNDHFIQNDRIERPQDGGGSGSGNGQASQDG) are disordered.

It belongs to the UPF0229 family.

This Salmonella arizonae (strain ATCC BAA-731 / CDC346-86 / RSK2980) protein is UPF0229 protein YeaH.